The chain runs to 198 residues: 7-methyl-GTP pyrophosphatase (198 aa).

Residue D75 is the Proton acceptor of the active site.

This sequence belongs to the Maf family. YceF subfamily. A divalent metal cation serves as cofactor.

It localises to the cytoplasm. The enzyme catalyses N(7)-methyl-GTP + H2O = N(7)-methyl-GMP + diphosphate + H(+). Functionally, nucleoside triphosphate pyrophosphatase that hydrolyzes 7-methyl-GTP (m(7)GTP). May have a dual role in cell division arrest and in preventing the incorporation of modified nucleotides into cellular nucleic acids. In Nitrosospira multiformis (strain ATCC 25196 / NCIMB 11849 / C 71), this protein is 7-methyl-GTP pyrophosphatase.